Reading from the N-terminus, the 875-residue chain is Lysine-specific demethylase 7A (875 aa).

The PHD-type zinc-finger motif lies at 5–56 (PLYCVCRQPYDVNRFMIECDICKDWFHGSCVQVVEHHAADIDVYHCPNCEPI). In terms of domain architecture, JmjC spans 197–353 (FSDTRMSNLV…MQLRCYEMER (157 aa)). Residue threonine 246 participates in substrate binding. Positions 249 and 251 each coordinate Fe cation. Residue lysine 266 participates in substrate binding. Fe cation is bound at residue histidine 321. 3 disordered regions span residues 442 to 506 (EDDS…SRKL), 629 to 710 (SQGE…NTDC), and 742 to 820 (QGNG…ATAK). Polar residues predominate over residues 448–462 (AVKTQGSAECSLSRS). Residues 478–505 (QDHHHHRRRHHHHHHHHHHHHHHHHSRK) are compositionally biased toward basic residues. Residues 650–663 (SDSKAGDSAEKCSL) are compositionally biased toward basic and acidic residues. Residues 688–697 (SHRHSHHKQA) are compositionally biased toward basic residues. Residues 742–762 (QGNGSSTSSSSDMWDSSEPCS) show a composition bias toward low complexity.

The protein belongs to the JHDM1 histone demethylase family. JHDM1D subfamily. The cofactor is Fe(2+). In terms of tissue distribution, predominantly expressed in brain.

It localises to the nucleus. Histone demethylase required for brain development. Specifically demethylates dimethylated 'Lys-9' and 'Lys-27' (H3K9me2 and H3K27me2, respectively) of histone H3 and monomethylated histone H4 'Lys-20' residue (H4K20Me1), thereby playing a central role in histone code. This is Lysine-specific demethylase 7A (kdm7a) from Danio rerio (Zebrafish).